Here is a 434-residue protein sequence, read N- to C-terminus: Histidinol dehydrogenase (434 aa).

3 residues coordinate NAD(+): Y130, Q191, and N214. Residues S237, Q259, and H262 each coordinate substrate. Residues Q259 and H262 each contribute to the Zn(2+) site. Catalysis depends on proton acceptor residues E327 and H328. Positions 328, 361, 415, and 420 each coordinate substrate. D361 is a binding site for Zn(2+). Residue H420 participates in Zn(2+) binding.

The protein belongs to the histidinol dehydrogenase family. Zn(2+) is required as a cofactor.

The enzyme catalyses L-histidinol + 2 NAD(+) + H2O = L-histidine + 2 NADH + 3 H(+). It participates in amino-acid biosynthesis; L-histidine biosynthesis; L-histidine from 5-phospho-alpha-D-ribose 1-diphosphate: step 9/9. Functionally, catalyzes the sequential NAD-dependent oxidations of L-histidinol to L-histidinaldehyde and then to L-histidine. In Rhizobium meliloti (strain 1021) (Ensifer meliloti), this protein is Histidinol dehydrogenase.